A 398-amino-acid polypeptide reads, in one-letter code: Acetate kinase (398 aa).

Asn-7 contributes to the Mg(2+) binding site. ATP is bound at residue Lys-14. Arg-92 contacts substrate. Asp-149 acts as the Proton donor/acceptor in catalysis. Residues 209–213 (HLGNG), 284–286 (DFR), and 332–336 (GVGEN) each bind ATP. A Mg(2+)-binding site is contributed by Glu-385.

The protein belongs to the acetokinase family. Homodimer. Mg(2+) serves as cofactor. It depends on Mn(2+) as a cofactor.

Its subcellular location is the cytoplasm. The catalysed reaction is acetate + ATP = acetyl phosphate + ADP. It participates in metabolic intermediate biosynthesis; acetyl-CoA biosynthesis; acetyl-CoA from acetate: step 1/2. Catalyzes the formation of acetyl phosphate from acetate and ATP. Can also catalyze the reverse reaction. The protein is Acetate kinase of Clostridioides difficile (strain 630) (Peptoclostridium difficile).